Here is a 109-residue protein sequence, read N- to C-terminus: Glutaredoxin-C13 (109 aa).

The region spanning 2–108 (AEMVARLASE…PMLKNAGALW (107 aa)) is the Glutaredoxin domain. Cysteine 22 and cysteine 25 are joined by a disulfide. A Responsive for interaction with TGA factors motif is present at residues 106–109 (ALWL).

This sequence belongs to the glutaredoxin family. CC-type subfamily.

It localises to the cytoplasm. It is found in the nucleus. Functionally, has a glutathione-disulfide oxidoreductase activity in the presence of NADPH and glutathione reductase. Reduces low molecular weight disulfides and proteins. This Oryza sativa subsp. japonica (Rice) protein is Glutaredoxin-C13 (GRXC13).